The primary structure comprises 307 residues: Oxygen-dependent coproporphyrinogen-III oxidase (307 aa).

S99 provides a ligand contact to substrate. 2 residues coordinate a divalent metal cation: H103 and H113. Residue H113 is the Proton donor of the active site. N115 to R117 contributes to the substrate binding site. A divalent metal cation-binding residues include H152 and H182. Positions Y247–R282 are important for dimerization. Substrate is bound at residue G265 to R267.

Belongs to the aerobic coproporphyrinogen-III oxidase family. Homodimer. A divalent metal cation serves as cofactor.

Its subcellular location is the cytoplasm. It carries out the reaction coproporphyrinogen III + O2 + 2 H(+) = protoporphyrinogen IX + 2 CO2 + 2 H2O. The protein operates within porphyrin-containing compound metabolism; protoporphyrin-IX biosynthesis; protoporphyrinogen-IX from coproporphyrinogen-III (O2 route): step 1/1. Involved in the heme biosynthesis. Catalyzes the aerobic oxidative decarboxylation of propionate groups of rings A and B of coproporphyrinogen-III to yield the vinyl groups in protoporphyrinogen-IX. In Burkholderia lata (strain ATCC 17760 / DSM 23089 / LMG 22485 / NCIMB 9086 / R18194 / 383), this protein is Oxygen-dependent coproporphyrinogen-III oxidase.